We begin with the raw amino-acid sequence, 251 residues long: NADPH-dependent oxidoreductase (251 aa).

Belongs to the flavin oxidoreductase frp family. FMN is required as a cofactor.

In terms of biological role, reduces FMN, organic nitro compounds and disulfide DTNB. Involved in maintenance of the cellular redox state and the disulfide stress response. This chain is NADPH-dependent oxidoreductase (nfrA), found in Staphylococcus saprophyticus subsp. saprophyticus (strain ATCC 15305 / DSM 20229 / NCIMB 8711 / NCTC 7292 / S-41).